A 330-amino-acid chain; its full sequence is Polygalacturonase inhibitor 2 (330 aa).

Residues 1–21 (MDKTMTLFLLLSTLLLTTSLA) form the signal peptide. 2 disulfides stabilise this stretch: Cys-25–Cys-55 and Cys-56–Cys-63. LRR repeat units lie at residues 69–93 (NHRV…VGDL), 94–117 (PYLT…TIAK), 118–141 (LKNL…FLSQ), 142–166 (LKNL…LSSL), 167–192 (RKLE…TFSG), 194–215 (VPSL…LGNP), 217–237 (FYRI…LFGA), 238–260 (KKTT…KVKL), 261–285 (AKTL…WSKA), and 287–308 (FQLL…EYIQ). Residues Asn-106, Asn-120, and Asn-130 are each glycosylated (N-linked (GlcNAc...) asparagine). Asn-291 is a glycosylation site (N-linked (GlcNAc...) asparagine). 2 disulfide bridges follow: Cys-298-Cys-320 and Cys-322-Cys-329.

It belongs to the polygalacturonase-inhibiting protein family.

The protein resides in the secreted. It is found in the cell wall. Its subcellular location is the membrane. In terms of biological role, inhibitor of fungal polygalacturonase. It is an important factor for plant resistance to phytopathogenic fungi. This Arabidopsis thaliana (Mouse-ear cress) protein is Polygalacturonase inhibitor 2 (PGIP2).